The following is a 331-amino-acid chain: Ketol-acid reductoisomerase (NADP(+)) (331 aa).

The region spanning 1–182 is the KARI N-terminal Rossmann domain; that stretch reads MATLYYDTDA…GGTRAGILET (182 aa). NADP(+) contacts are provided by residues 25-28, serine 51, serine 53, and 83-86; these read YGSQ and DEFQ. Residue histidine 108 is part of the active site. Glycine 134 lines the NADP(+) pocket. The region spanning 183–328 is the KARI C-terminal knotted domain; the sequence is NFKEETETDL…KGLRAMFSWL (146 aa). Residues aspartate 191, glutamate 195, glutamate 227, and glutamate 231 each coordinate Mg(2+). Substrate is bound at residue serine 252.

This sequence belongs to the ketol-acid reductoisomerase family. Mg(2+) is required as a cofactor.

The catalysed reaction is (2R)-2,3-dihydroxy-3-methylbutanoate + NADP(+) = (2S)-2-acetolactate + NADPH + H(+). The enzyme catalyses (2R,3R)-2,3-dihydroxy-3-methylpentanoate + NADP(+) = (S)-2-ethyl-2-hydroxy-3-oxobutanoate + NADPH + H(+). It participates in amino-acid biosynthesis; L-isoleucine biosynthesis; L-isoleucine from 2-oxobutanoate: step 2/4. The protein operates within amino-acid biosynthesis; L-valine biosynthesis; L-valine from pyruvate: step 2/4. Functionally, involved in the biosynthesis of branched-chain amino acids (BCAA). Catalyzes an alkyl-migration followed by a ketol-acid reduction of (S)-2-acetolactate (S2AL) to yield (R)-2,3-dihydroxy-isovalerate. In the isomerase reaction, S2AL is rearranged via a Mg-dependent methyl migration to produce 3-hydroxy-3-methyl-2-ketobutyrate (HMKB). In the reductase reaction, this 2-ketoacid undergoes a metal-dependent reduction by NADPH to yield (R)-2,3-dihydroxy-isovalerate. This is Ketol-acid reductoisomerase (NADP(+)) from Synechococcus sp. (strain RCC307).